A 236-amino-acid chain; its full sequence is Phosphoribosylaminoimidazole-succinocarboxamide synthase (236 aa).

This sequence belongs to the SAICAR synthetase family.

The catalysed reaction is 5-amino-1-(5-phospho-D-ribosyl)imidazole-4-carboxylate + L-aspartate + ATP = (2S)-2-[5-amino-1-(5-phospho-beta-D-ribosyl)imidazole-4-carboxamido]succinate + ADP + phosphate + 2 H(+). Its pathway is purine metabolism; IMP biosynthesis via de novo pathway; 5-amino-1-(5-phospho-D-ribosyl)imidazole-4-carboxamide from 5-amino-1-(5-phospho-D-ribosyl)imidazole-4-carboxylate: step 1/2. This Campylobacter jejuni subsp. doylei (strain ATCC BAA-1458 / RM4099 / 269.97) protein is Phosphoribosylaminoimidazole-succinocarboxamide synthase.